Reading from the N-terminus, the 201-residue chain is FMN reductase (NADH) RutF 1 (201 aa).

Positions proline 167–alanine 195 are enriched in low complexity. The disordered stretch occupies residues proline 167–alanine 201.

It belongs to the non-flavoprotein flavin reductase family. RutF subfamily.

The catalysed reaction is FMNH2 + NAD(+) = FMN + NADH + 2 H(+). In terms of biological role, catalyzes the reduction of FMN to FMNH2 which is used to reduce pyrimidine by RutA via the Rut pathway. This is FMN reductase (NADH) RutF 1 from Methylorubrum extorquens (strain CM4 / NCIMB 13688) (Methylobacterium extorquens).